A 177-amino-acid polypeptide reads, in one-letter code: Dual-action ribosomal maturation protein DarP (177 aa).

The protein belongs to the DarP family.

The protein localises to the cytoplasm. In terms of biological role, member of a network of 50S ribosomal subunit biogenesis factors which assembles along the 30S-50S interface, preventing incorrect 23S rRNA structures from forming. Promotes peptidyl transferase center (PTC) maturation. The sequence is that of Dual-action ribosomal maturation protein DarP from Histophilus somni (strain 2336) (Haemophilus somnus).